Consider the following 739-residue polypeptide: Adhesion G protein-coupled receptor L4 (739 aa).

Positions 1–19 (MRLLPLLVGFSTLLNCSYT) are cleaved as a signal peptide. Positions 20–57 (QNCSKTTCLPNAKCEVHNGVEACFCSQGYSGNGVTICE) constitute an EGF-like 1 domain. The Extracellular segment spans residues 20-481 (QNCSKTTCLP…DYNILTRITQ (462 aa)). N-linked (GlcNAc...) asparagine glycosylation is present at N21. Disulfide bonds link C22-C33, C27-C42, C44-C56, C62-C74, C68-C83, C85-C106, C112-C124, C118-C133, and C135-C156. The EGF-like 2; calcium-binding domain occupies 58 to 107 (DIDECSESSVCGDHAVCENVNGGFSCFCREGYQTATGKSQFTPNDGSYCQ). The EGF-like 3; calcium-binding domain maps to 108 to 157 (DIDECSESSVCGDHAVCENVNGGFSCFCREGYQTATGKSQFTPNDGSYCQ). 7 N-linked (GlcNAc...) asparagine glycosylation sites follow: N176, N226, N237, N298, N422, N430, and N444. Residues 293-468 (SQFDMNSTDL…AILMSSTSSI (176 aa)) form the GAIN-B domain. Disulfide bonds link C418–C450 and C438–C452. A GPS region spans residues 418-468 (CAFWNYSVDAMNNGSWSTEGCELTHSNDTHTSCRCSHLTHFAILMSSTSSI). A helical transmembrane segment spans residues 482–502 (LGIIISLICLAICIFTFWFFS). The Cytoplasmic portion of the chain corresponds to 503-513 (EIQSTRTTIHK). The helical transmembrane segment at 514-534 (NLCCSLFLAELVFLIGININT) threads the bilayer. Topologically, residues 535–548 (NKLVCSIIAGLLHY) are extracellular. Residues 549-569 (FFLAAFAWMCIEGIHLYLIVV) traverse the membrane as a helical segment. Over 570 to 581 (GVIYNKGFLHKN) the chain is Cytoplasmic. The helical transmembrane segment at 582–602 (FYIFGYLSPAVVVGFSASLGY) threads the bilayer. The Extracellular segment spans residues 603–622 (RYYGTTKVCWLSTENNFIWS). The chain crosses the membrane as a helical span at residues 623-643 (FIGPACLIILVNLLAFGVIIY). Over 644–667 (KVFRHTAGLKPEVSCYENIRSCAR) the chain is Cytoplasmic. Residues 668 to 688 (GALALLFLLGTTWIFGVLHVV) form a helical membrane-spanning segment. Residues 689–695 (HASVVTA) lie on the Extracellular side of the membrane. Residues 696–716 (YLFTVSNAFQGMFIFLFLCVL) traverse the membrane as a helical segment. The Cytoplasmic portion of the chain corresponds to 717–739 (SRKIQEEYYRLFKNVPCCFGCLR).

This sequence belongs to the G-protein coupled receptor 2 family. Adhesion G-protein coupled receptor (ADGR) subfamily. In terms of assembly, heterodimer of 2 chains generated by proteolytic processing; the large extracellular N-terminal fragment and the membrane-bound C-terminal fragment predominantly remain associated and non-covalently linked. Glycosylated. In terms of processing, proteolytically cleaved into 2 subunits, an extracellular alpha subunit and a seven-transmembrane subunit.

The protein resides in the cell membrane. In terms of biological role, endothelial orphan receptor that acts as a key regulator of angiogenesis. The sequence is that of Adhesion G protein-coupled receptor L4 (Adgrl4) from Mus musculus (Mouse).